The following is a 548-amino-acid chain: Probable nuclear hormone receptor HR3 (548 aa).

The interval 1–27 is disordered; the sequence is MNNNQFHELFGSQWPPDQHGGHSSAST. Positions 101–176 form a DNA-binding region, nuclear receptor; the sequence is IIPCKVCGDK…LGMSRDAVKF (76 aa). 2 consecutive NR C4-type zinc fingers follow at residues 104–124 and 140–164; these read CKVC…CEGC and CPRN…LQKC. A disordered region spans residues 198 to 228; the sequence is MRAQNDAAPDSVYDAQQQTPSSSDQFHGHYN. Residues 211-222 are compositionally biased toward polar residues; the sequence is DAQQQTPSSSDQ. One can recognise an NR LBD domain in the interval 295–539; the sequence is ISKVLVKSLA…PALYKELFSL (245 aa).

The protein belongs to the nuclear hormone receptor family. NR1 subfamily.

The protein localises to the nucleus. Functionally, putative receptor whose ligand is not yet known. This is Probable nuclear hormone receptor HR3 (HR3) from Manduca sexta (Tobacco hawkmoth).